Reading from the N-terminus, the 294-residue chain is 33 kDa chaperonin (294 aa).

2 disulfide bridges follow: cysteine 239–cysteine 241 and cysteine 272–cysteine 275.

Belongs to the HSP33 family. In terms of processing, under oxidizing conditions two disulfide bonds are formed involving the reactive cysteines. Under reducing conditions zinc is bound to the reactive cysteines and the protein is inactive.

It localises to the cytoplasm. Redox regulated molecular chaperone. Protects both thermally unfolding and oxidatively damaged proteins from irreversible aggregation. Plays an important role in the bacterial defense system toward oxidative stress. The polypeptide is 33 kDa chaperonin (Lacticaseibacillus paracasei (strain ATCC 334 / BCRC 17002 / CCUG 31169 / CIP 107868 / KCTC 3260 / NRRL B-441) (Lactobacillus paracasei)).